We begin with the raw amino-acid sequence, 469 residues long: tRNA(Ile)-lysidine synthase (469 aa).

26-31 provides a ligand contact to ATP; it reads SGGPDS.

The protein belongs to the tRNA(Ile)-lysidine synthase family.

It localises to the cytoplasm. It catalyses the reaction cytidine(34) in tRNA(Ile2) + L-lysine + ATP = lysidine(34) in tRNA(Ile2) + AMP + diphosphate + H(+). In terms of biological role, ligates lysine onto the cytidine present at position 34 of the AUA codon-specific tRNA(Ile) that contains the anticodon CAU, in an ATP-dependent manner. Cytidine is converted to lysidine, thus changing the amino acid specificity of the tRNA from methionine to isoleucine. This is tRNA(Ile)-lysidine synthase from Clostridium perfringens (strain 13 / Type A).